The primary structure comprises 903 residues: Chitin synthase 1 (903 aa).

The interval 1 to 154 is disordered; it reads MDPRYGAQPQ…YQDQPQQGGG (154 aa). Residues 67–79 show a composition bias toward polar residues; the sequence is DHLNLNAAQSVDN. An N-linked (GlcNAc...) asparagine glycan is attached at asparagine 79. Over residues 100–117 the composition is skewed to low complexity; the sequence is YYNQPYEPRPQQQPYDQG. Polar residues predominate over residues 135–150; sequence HQPSDAPSEPYQDQPQ. The next 9 membrane-spanning stretches (helical) occupy residues 444 to 464, 543 to 563, 573 to 593, 619 to 639, 654 to 674, 700 to 720, 729 to 749, 828 to 848, and 875 to 895; these read SAFGFISVLPGAFSAYRYVAL, RWLNGSFFAAIYAIVHFLDFL, FAFFIEFIFNTINMIFAWFAI, ILGVVFTWLYGVFLITCFVLS, MCWFWAIIMIYLLFAAIFIAV, MLIISVMSTFGIWLIASLIML, LVQYMLLTPTFTNVLNVYAFC, GVVLIWMVSNFGLAALVLSSA, and IVLWSVAGLSAFKFIGAMWFL.

This sequence belongs to the chitin synthase family. Class I subfamily.

It localises to the cell membrane. It catalyses the reaction [(1-&gt;4)-N-acetyl-beta-D-glucosaminyl](n) + UDP-N-acetyl-alpha-D-glucosamine = [(1-&gt;4)-N-acetyl-beta-D-glucosaminyl](n+1) + UDP + H(+). Polymerizes chitin, a structural polymer of the cell wall and septum, by transferring the sugar moiety of UDP-GlcNAc to the non-reducing end of the growing chitin polymer. Plays an important role in nuclear sorting or distribution. The chain is Chitin synthase 1 from Fusarium oxysporum f. sp. lycopersici (strain 4287 / CBS 123668 / FGSC 9935 / NRRL 34936) (Fusarium vascular wilt of tomato).